Reading from the N-terminus, the 521-residue chain is Ribonuclease Y (521 aa).

The helical transmembrane segment at 5–25 (TVWILISILLATVGAVVGFFV) threads the bilayer. The disordered stretch occupies residues 87 to 117 (KQENRLMQKEENLDRKDETLDNRERQLEKKE). Positions 211 to 274 (TVSVVNLPND…ETARIALDKL (64 aa)) constitute a KH domain. In terms of domain architecture, HD spans 337–430 (VLKHSMEVAY…VAAADALSAA (94 aa)).

This sequence belongs to the RNase Y family.

Its subcellular location is the cell membrane. In terms of biological role, endoribonuclease that initiates mRNA decay. This Bacillus mycoides (strain KBAB4) (Bacillus weihenstephanensis) protein is Ribonuclease Y.